A 578-amino-acid polypeptide reads, in one-letter code: Tetratricopeptide repeat protein 39A (578 aa).

3 TPR repeats span residues A280–W313, C470–I503, and P511–Y544.

This sequence belongs to the TTC39 family.

The chain is Tetratricopeptide repeat protein 39A (Ttc39a) from Mus musculus (Mouse).